The sequence spans 493 residues: MAENLVNTFVTQVIENSDYEELDRIYLTNKVFTLVGEGVADVETDSSELIDLKDQLLQAGVKAGSVGELNEEQDIIGAQLMDLITPRPSVVNRNFWDTYKSNPEQAIADFYAQSKRNDYVKVKAIAQNIAYKAPTKYGDLEITINLSKPEKDPKAIAAAKNAVASDYPKCQLCMENEGYLGRINHPARSNHRVVRFQMEDKEWGFQYSPYAYFNEHSIFFYGKHEPMHISPLTFGRLLTIVEAFPGYFAGSNADLPIVGGSILTHEHYQGGRHTFPMEVAGIKEKVSFDGYSDVEAGIVNWPMSVLRLRSEDKERLIALATKILNCWRGYSDEKAGVLAESDGQPHHTITPIARRKDGKFELDLVLRDNQTSEEYPDGIYHPHKDVQHIKKENIGLIEVMGLAILPPRLKTELKDVEDYLLGQGNQVAPIHQEWADELKAQNPNITAEEVTEVVRQSVADIFARVLEDAGVYKTNNEGLDQFKAFVDFVNLAD.

This sequence belongs to the galactose-1-phosphate uridylyltransferase type 2 family.

The protein resides in the cytoplasm. The enzyme catalyses alpha-D-galactose 1-phosphate + UDP-alpha-D-glucose = alpha-D-glucose 1-phosphate + UDP-alpha-D-galactose. It participates in carbohydrate metabolism; galactose metabolism. The sequence is that of Galactose-1-phosphate uridylyltransferase from Streptococcus thermophilus (strain ATCC BAA-250 / LMG 18311).